Reading from the N-terminus, the 89-residue chain is Small ribosomal subunit protein uS15 (89 aa).

It belongs to the universal ribosomal protein uS15 family. In terms of assembly, part of the 30S ribosomal subunit. Forms a bridge to the 50S subunit in the 70S ribosome, contacting the 23S rRNA.

Its function is as follows. One of the primary rRNA binding proteins, it binds directly to 16S rRNA where it helps nucleate assembly of the platform of the 30S subunit by binding and bridging several RNA helices of the 16S rRNA. In terms of biological role, forms an intersubunit bridge (bridge B4) with the 23S rRNA of the 50S subunit in the ribosome. The polypeptide is Small ribosomal subunit protein uS15 (Coxiella burnetii (strain CbuK_Q154) (Coxiella burnetii (strain Q154))).